We begin with the raw amino-acid sequence, 54 residues long: ATP synthase protein 8 (54 aa).

Residues 9-29 (WIINFFIVWTADFTLLIVLSI) form a helical membrane-spanning segment.

This sequence belongs to the ATPase protein 8 family. F-type ATPases have 2 components, CF(1) - the catalytic core - and CF(0) - the membrane proton channel.

It localises to the mitochondrion membrane. Functionally, mitochondrial membrane ATP synthase (F(1)F(0) ATP synthase or Complex V) produces ATP from ADP in the presence of a proton gradient across the membrane which is generated by electron transport complexes of the respiratory chain. F-type ATPases consist of two structural domains, F(1) - containing the extramembraneous catalytic core and F(0) - containing the membrane proton channel, linked together by a central stalk and a peripheral stalk. During catalysis, ATP synthesis in the catalytic domain of F(1) is coupled via a rotary mechanism of the central stalk subunits to proton translocation. Part of the complex F(0) domain. Minor subunit located with subunit a in the membrane. This is ATP synthase protein 8 (MT-ATP8) from Arbacia lixula (Black urchin).